A 240-amino-acid polypeptide reads, in one-letter code: Ubiquinone biosynthesis O-methyltransferase (240 aa).

Residues Arg44, Gly64, Asp85, and Met129 each coordinate S-adenosyl-L-methionine.

The protein belongs to the methyltransferase superfamily. UbiG/COQ3 family.

The enzyme catalyses a 3-demethylubiquinol + S-adenosyl-L-methionine = a ubiquinol + S-adenosyl-L-homocysteine + H(+). It carries out the reaction a 3-(all-trans-polyprenyl)benzene-1,2-diol + S-adenosyl-L-methionine = a 2-methoxy-6-(all-trans-polyprenyl)phenol + S-adenosyl-L-homocysteine + H(+). Its pathway is cofactor biosynthesis; ubiquinone biosynthesis. Its function is as follows. O-methyltransferase that catalyzes the 2 O-methylation steps in the ubiquinone biosynthetic pathway. The sequence is that of Ubiquinone biosynthesis O-methyltransferase from Escherichia coli O9:H4 (strain HS).